A 151-amino-acid chain; its full sequence is Acidic phospholipase A2 4 (151 aa).

A signal peptide spans 1–27 (MYPAHLLVLLAVCVSLLGAASIPARPL). Intrachain disulfides connect Cys38–Cys104, Cys54–Cys151, Cys56–Cys72, Cys71–Cys132, Cys78–Cys125, Cys88–Cys118, and Cys111–Cys123. Tyr55, Gly57, and Gly59 together coordinate Ca(2+). His75 is an active-site residue. Asp76 serves as a coordination point for Ca(2+). The active site involves Asp126.

Belongs to the phospholipase A2 family. Group I subfamily. D49 sub-subfamily. Requires Ca(2+) as cofactor. As to expression, expressed by the venom gland.

It is found in the secreted. The catalysed reaction is a 1,2-diacyl-sn-glycero-3-phosphocholine + H2O = a 1-acyl-sn-glycero-3-phosphocholine + a fatty acid + H(+). In terms of biological role, PLA2 catalyzes the calcium-dependent hydrolysis of the 2-acyl groups in 3-sn-phosphoglycerides. In Tropidechis carinatus (Australian rough-scaled snake), this protein is Acidic phospholipase A2 4.